The following is a 44-amino-acid chain: 2S seed storage albumin protein (44 aa).

Disulfide bonds link Cys7-Cys42 and Cys19-Cys31.

Belongs to the 2S seed storage albumins family. The mature protein consists of a small and a large chain linked by 2 disulfide bonds.

Its function is as follows. This is a 2S seed storage protein. Has antifungal activity. Inhibits spore germination in H.sativum (IC(50)=62.5 ug/ml) and P.betae (IC(50)=62.5 ug/ml). Inhibits growth of H.sativum, V.albo-atrum and P.infestans. The sequence is that of 2S seed storage albumin protein from Taraxacum officinale (Common dandelion).